A 316-amino-acid chain; its full sequence is Iron-sulfur cluster assembly SufBD family protein MJ0034 (316 aa).

Belongs to the iron-sulfur cluster assembly SufBD family.

The chain is Iron-sulfur cluster assembly SufBD family protein MJ0034 from Methanocaldococcus jannaschii (strain ATCC 43067 / DSM 2661 / JAL-1 / JCM 10045 / NBRC 100440) (Methanococcus jannaschii).